The primary structure comprises 1514 residues: Mitogen-activated protein kinase-binding protein 1 (1514 aa).

N-acetylalanine is present on Ala-2. 12 WD repeats span residues 88–129 (SSRK…QVAE), 132–173 (EHKY…VVAS), 175–213 (KVSSRVTAVSFSEDCSYFVTAGNRHIKFWYLDDSKTSKV), 276–315 (DSFTTTVAHCISVSQDYIFCGCADGTVRLFNPSNLHFLST), 342–381 (ARYPDTIALTFDPTNQWLSCVYNDHSIYVWDVRDPKKVGK), 387–436 (YHSS…VHGS), 477–516 (DPRVGIRSVCVSPNGQHLASGDRMGTLRVHELQSLSEMLK), 519–561 (AHDS…SLQQ), 565–606 (EHSS…DGVQ), 614–653 (VRKTTLYDMDVEPSWKYTAIGCQDRNIRIFNISSGKQKKL), 659–698 (GEDGTLIKVQTDPSGIYIATSCSDKNLSIFDFSSGECVAT), and 701–740 (GHSEIVTGMKFSNDCKHLISVSGDSCIFVWRLSSEMTISM). Disordered regions lie at residues 748–804 (RQRQ…PALP), 880–925 (PSLQ…SQPC), 951–1256 (EDGI…SSMA), and 1299–1336 (DIPKPLPDRPTLAAFSPVTKGRAPGEAEKPGFPVGLGK). A compositionally biased stretch (acidic residues) spans 789-800 (KEGEDEGTEEEL). Composition is skewed to polar residues over residues 905–925 (LETSLTSQNEKPPRPQASQPC) and 961–971 (DNPTMDTSEFQ). A compositionally biased stretch (low complexity) spans 996 to 1011 (DSACSVDYSSSCLSSP). Positions 1032 to 1048 (DLEEPAEGDEEEEEEEG) are enriched in acidic residues. The segment covering 1113 to 1126 (PSPSSSSLALMSRP) has biased composition (low complexity). Polar residues-rich tracts occupy residues 1188–1200 (SPFSGLQKAQSVH) and 1245–1256 (HSYQNPTTSSMA). Ser-1198 is subject to Phosphoserine.

In terms of assembly, can form homodimers (via C-terminus). Interacts (via C-terminus) with WDR62 (via C-terminus). Interacts with MAPK9. Interacts (via N-terminus) with NOD2; the interaction is enhanced in presence of muramyl dipeptide (MDP). Interacts with MAPK10. In terms of tissue distribution, expressed in intestinal mucosa, where it is detected in epithelial cells, endothelial cells, smooth muscle cells and immune cells, such as lymphocytes. Expressed in kidney.

The protein localises to the cytoplasm. It is found in the nucleus. Its subcellular location is the cytoskeleton. It localises to the spindle pole. Functionally, negative regulator of NOD2 function. It down-regulates NOD2-induced processes such as activation of NF-kappa-B signaling, IL8 secretion and antibacterial response. Involved in JNK signaling pathway. The polypeptide is Mitogen-activated protein kinase-binding protein 1 (MAPKBP1) (Homo sapiens (Human)).